The sequence spans 254 residues: Aspartate/glutamate leucyltransferase (254 aa).

The protein belongs to the R-transferase family. Bpt subfamily.

It is found in the cytoplasm. The enzyme catalyses N-terminal L-glutamyl-[protein] + L-leucyl-tRNA(Leu) = N-terminal L-leucyl-L-glutamyl-[protein] + tRNA(Leu) + H(+). It carries out the reaction N-terminal L-aspartyl-[protein] + L-leucyl-tRNA(Leu) = N-terminal L-leucyl-L-aspartyl-[protein] + tRNA(Leu) + H(+). Its function is as follows. Functions in the N-end rule pathway of protein degradation where it conjugates Leu from its aminoacyl-tRNA to the N-termini of proteins containing an N-terminal aspartate or glutamate. This is Aspartate/glutamate leucyltransferase from Xylella fastidiosa (strain 9a5c).